A 328-amino-acid chain; its full sequence is Protein-glutamine deamidase Cif (328 aa).

Residues 1-68 (MLEHGVMKIP…TNRTGENPMI (68 aa)) are disordered. Positions 52 to 63 (RSSSISNTNRTG) are enriched in polar residues. Catalysis depends on residues cysteine 156, histidine 211, and glutamine 231.

The protein belongs to the Cif family.

The protein resides in the secreted. It is found in the host nucleus. It catalyses the reaction L-glutaminyl-[protein] + H2O = L-glutamyl-[protein] + NH4(+). Functionally, protein-glutamine deamidase effector that inhibits the host cell cycle and other key cellular processes such as the actin network and programmed-cell death. Acts by mediating the side chain deamidation of 'Gln-40' of host NEDD8, converting it to glutamate, thereby abolishing the activity of cullin-RING-based E3 ubiquitin-protein ligase complexes (CRL complexes). Inactivation of CRL complexes prevents ubiquitination and subsequent degradation of the cyclin-dependent kinase inhibitors CDKN1A/p21 and CDKN1B/p27, leading to G1 and G2 cell cycle arrests in host cells. Deamidation of 'Gln-40' of host NEDD8 also triggers macrophage-specific programmed cell death. Also able to catalyze deamidation of 'Gln-40' of host ubiquitin in vitro; however, NEDD8 constitutes the preferred substrate in vivo. Also regulates the host NF-kappa-B signaling via activation of MAPK/ERK cascade: activation of host MAPK/ERK cascade is independent of CRL complexes inhibition, suggesting that Cif has other host protein targets than NEDD8. This Burkholderia pseudomallei (strain K96243) protein is Protein-glutamine deamidase Cif.